We begin with the raw amino-acid sequence, 295 residues long: Pyridoxal 5'-phosphate synthase subunit PdxS (295 aa).

Asp25 is a D-ribose 5-phosphate binding site. Lys82 functions as the Schiff-base intermediate with D-ribose 5-phosphate in the catalytic mechanism. Gly154 provides a ligand contact to D-ribose 5-phosphate. Arg166 provides a ligand contact to D-glyceraldehyde 3-phosphate. Residues Gly215 and 236-237 each bind D-ribose 5-phosphate; that span reads GS.

The protein belongs to the PdxS/SNZ family. In the presence of PdxT, forms a dodecamer of heterodimers.

It carries out the reaction aldehydo-D-ribose 5-phosphate + D-glyceraldehyde 3-phosphate + L-glutamine = pyridoxal 5'-phosphate + L-glutamate + phosphate + 3 H2O + H(+). It participates in cofactor biosynthesis; pyridoxal 5'-phosphate biosynthesis. Catalyzes the formation of pyridoxal 5'-phosphate from ribose 5-phosphate (RBP), glyceraldehyde 3-phosphate (G3P) and ammonia. The ammonia is provided by the PdxT subunit. Can also use ribulose 5-phosphate and dihydroxyacetone phosphate as substrates, resulting from enzyme-catalyzed isomerization of RBP and G3P, respectively. This Actinobacillus pleuropneumoniae serotype 5b (strain L20) protein is Pyridoxal 5'-phosphate synthase subunit PdxS.